Consider the following 132-residue polypeptide: Sodium/calcium exchanger regulatory protein 1 (132 aa).

The (9Z)-hexadecenoate site is built by arginine 126 and tyrosine 128.

It belongs to the calycin superfamily. Fatty-acid binding protein (FABP) family. Interacts with Na(+)/Ca(2+) exchanger NCXSQ1; ReP1-NCXSQ phosphorylation does not affect the interaction. In terms of processing, phosphorylated. Phosphorylation may result in the release of the bound fatty acid. As to expression, expressed in the optic nerve (at protein level).

The protein resides in the cytoplasm. It localises to the membrane. Binds and may transport fatty acids such as palmitoleate. Also binds poly-phosphoinositides including phosphatidylinositol 4-phosphate (PtdIns(4)P), phosphatidylinositol 4,5-bisphosphate (PtdIns(4,5)P2) and phosphatidylinositol 3,4,5-trisphosphate (PtdIns(3,4,5)P3), and phosphatidic acid. When phosphorylated, stimulates the activity of optic nerve Na(+)/Ca(2+) exchanger. In Doryteuthis pealeii (Longfin inshore squid), this protein is Sodium/calcium exchanger regulatory protein 1.